The sequence spans 313 residues: Ribosomal RNA small subunit methyltransferase H (313 aa).

S-adenosyl-L-methionine is bound by residues 35–37 (GGH), Asp-55, Phe-79, Asp-101, and Gln-108.

This sequence belongs to the methyltransferase superfamily. RsmH family.

The protein localises to the cytoplasm. It carries out the reaction cytidine(1402) in 16S rRNA + S-adenosyl-L-methionine = N(4)-methylcytidine(1402) in 16S rRNA + S-adenosyl-L-homocysteine + H(+). In terms of biological role, specifically methylates the N4 position of cytidine in position 1402 (C1402) of 16S rRNA. This is Ribosomal RNA small subunit methyltransferase H from Salmonella newport (strain SL254).